We begin with the raw amino-acid sequence, 563 residues long: Solute carrier family 22 member 6 (563 aa).

Over 1–9 the chain is Cytoplasmic; sequence MAFNDLLQQ. Residues 10-30 form a helical membrane-spanning segment; the sequence is VGGVGRFQQIQVTLVVLPLLL. At 31 to 135 the chain is on the extracellular side; that stretch reads MASHNTLQNF…LVCSHRALRQ (105 aa). N-linked (GlcNAc...) asparagine glycosylation is found at asparagine 39, asparagine 56, asparagine 92, asparagine 97, and asparagine 113. A helical membrane pass occupies residues 136-156; it reads LAQSLYMVGVLLGAMVFGYLA. Residues 157–164 lie on the Cytoplasmic side of the membrane; sequence DRLGRRKV. The helical transmembrane segment at 165-187 threads the bilayer; the sequence is LILNYLQTAVSGTCAAFAPNFPI. At 188 to 190 the chain is on the extracellular side; the sequence is YCA. The helical transmembrane segment at 191–213 threads the bilayer; it reads FRLLSGMALAGISLNCMTLNVEW. Residues 214–224 lie on the Cytoplasmic side of the membrane; that stretch reads MPIHTRACVGT. The chain crosses the membrane as a helical span at residues 225–245; sequence LIGYVYSLGQFLLAGVAYAVP. Residues 246–248 are Extracellular-facing; it reads HWR. A helical membrane pass occupies residues 249 to 269; the sequence is HLQLLVSAPFFAFFIYSWFFI. Over 270–337 the chain is Cytoplasmic; the sequence is ESARWHSSSG…ELLRCPTLRH (68 aa). The chain crosses the membrane as a helical span at residues 338–358; it reads LFLCLSMLWFATSFAYYGLVM. Residues 359 to 368 lie on the Extracellular side of the membrane; the sequence is DLQGFGVSIY. A helical membrane pass occupies residues 369–389; that stretch reads LIQVIFGAVDLPAKLVGFLVI. At 390–395 the chain is on the cytoplasmic side; that stretch reads NSLGRR. The chain crosses the membrane as a helical span at residues 396–416; it reads PAQMAALLLAGICILLNGVIP. At 417–425 the chain is on the extracellular side; the sequence is QDQSIVRTS. Residues 426–446 traverse the membrane as a helical segment; the sequence is LAVLGKGCLAASFNCIFLYTG. Over 447-455 the chain is Cytoplasmic; it reads ELYPTMIRQ. Residues 456–475 traverse the membrane as a helical segment; it reads TGMGMGSTMARVGSIVSPLV. Over 476-484 the chain is Extracellular; the sequence is SMTAELYPS. The chain crosses the membrane as a helical span at residues 485–505; it reads MPLFIYGAVPVAASAVTVLLP. The Cytoplasmic portion of the chain corresponds to 506 to 563; that stretch reads ETLGQPLPDTVQDLESRWAPTQKEAGIYPRKGKQTRQQQEHQKYMVPLQASAQEKNGL. Positions 525–563 are disordered; sequence PTQKEAGIYPRKGKQTRQQQEHQKYMVPLQASAQEKNGL.

The protein belongs to the major facilitator (TC 2.A.1) superfamily. Organic cation transporter (TC 2.A.1.19) family. Post-translationally, glycosylated. Glycosylation at Asn-113 may occur at a secondary level. Glycosylation is necessary for proper targeting of the transporter to the plasma membrane. In terms of tissue distribution, strongly expressed in kidney. Expressed at lower level in liver, skeletal muscle, brain and placenta. In kidney, found at the basolateral membrane of the proximal tubule. In testis, primarily localized to the basal membrane of Sertoli cells and weakly expressed in Leydig cells and vascular endothelial cells.

The protein resides in the basolateral cell membrane. It is found in the basal cell membrane. It carries out the reaction (6R)-L-erythro-5,6,7,8-tetrahydrobiopterin(out) + a dicarboxylate(in) = (6R)-L-erythro-5,6,7,8-tetrahydrobiopterin(in) + a dicarboxylate(out). The enzyme catalyses L-erythro-7,8-dihydrobiopterin(out) + a dicarboxylate(in) = L-erythro-7,8-dihydrobiopterin(in) + a dicarboxylate(out). The catalysed reaction is L-sepiapterin(out) + a dicarboxylate(in) = L-sepiapterin(in) + a dicarboxylate(out). It catalyses the reaction prostaglandin F2alpha(out) + a dicarboxylate(in) = prostaglandin F2alpha(in) + a dicarboxylate(out). It carries out the reaction prostaglandin E2(out) + a dicarboxylate(in) = prostaglandin E2(in) + a dicarboxylate(out). The enzyme catalyses 3',5'-cyclic AMP(out) + a dicarboxylate(in) = 3',5'-cyclic AMP(in) + a dicarboxylate(out). The catalysed reaction is 3',5'-cyclic GMP(out) + a dicarboxylate(in) = 3',5'-cyclic GMP(in) + a dicarboxylate(out). It catalyses the reaction urate(out) + a dicarboxylate(in) = urate(in) + a dicarboxylate(out). It carries out the reaction kynurenate(out) + glutarate(in) = kynurenate(in) + glutarate(out). The enzyme catalyses (indol-3-yl)acetate(out) + a dicarboxylate(in) = (indol-3-yl)acetate(in) + a dicarboxylate(out). The catalysed reaction is indoxyl sulfate(out) + a dicarboxylate(in) = indoxyl sulfate(in) + a dicarboxylate(out). It catalyses the reaction N-benzoylglycine(out) + a dicarboxylate(in) = N-benzoylglycine(in) + a dicarboxylate(out). It carries out the reaction 3-carboxy-4-methyl-5-propyl-2-furanpropanoate(out) + a dicarboxylate(in) = 3-carboxy-4-methyl-5-propyl-2-furanpropanoate(in) + a dicarboxylate(out). Functionally, secondary active transporter that functions as a Na(+)-independent organic anion (OA)/dicarboxylate antiporter where the uptake of one molecule of OA into the cell is coupled with an efflux of one molecule of intracellular dicarboxylate such as 2-oxoglutarate or glutarate. Mediates the uptake of OA across the basolateral side of proximal tubule epithelial cells, thereby contributing to the renal elimination of endogenous OA from the systemic circulation into the urine. Functions as a biopterin transporters involved in the uptake and the secretion of coenzymes tetrahydrobiopterin (BH4), dihydrobiopterin (BH2) and sepiapterin to urine, thereby determining baseline levels of blood biopterins. Transports prostaglandin E2 (PGE2) and prostaglandin F2-alpha (PGF2-alpha) and may contribute to their renal excretion. Also mediates the uptake of cyclic nucleotides such as cAMP and cGMP. Involved in the transport of neuroactive tryptophan metabolites kynurenate (KYNA) and xanthurenate (XA) and may contribute to their secretion from the brain. May transport glutamate. Also involved in the disposition of uremic toxins and potentially toxic xenobiotics by the renal organic anion secretory pathway, helping reduce their undesired toxicological effects on the body. Uremic toxins include the indoxyl sulfate (IS), hippurate/N-benzoylglycine (HA), indole acetate (IA), 3-carboxy-4- methyl-5-propyl-2-furanpropionate (CMPF) and urate. Xenobiotics include the mycotoxin ochratoxin (OTA). May also contribute to the transport of organic compounds in testes across the blood-testis-barrier. The protein is Solute carrier family 22 member 6 of Homo sapiens (Human).